The sequence spans 404 residues: CinA-like protein (404 aa).

It belongs to the CinA family.

The chain is CinA-like protein from Deinococcus radiodurans (strain ATCC 13939 / DSM 20539 / JCM 16871 / CCUG 27074 / LMG 4051 / NBRC 15346 / NCIMB 9279 / VKM B-1422 / R1).